The sequence spans 505 residues: 2,3-bisphosphoglycerate-independent phosphoglycerate mutase (505 aa).

Residues D11 and S61 each coordinate Mn(2+). S61 (phosphoserine intermediate) is an active-site residue. Substrate-binding positions include H122, 152 to 153 (RD), R184, R190, 258 to 261 (RPDR), and K331. Residues D396, H400, D437, H438, and H455 each coordinate Mn(2+).

Belongs to the BPG-independent phosphoglycerate mutase family. Monomer. Mn(2+) serves as cofactor.

It carries out the reaction (2R)-2-phosphoglycerate = (2R)-3-phosphoglycerate. Its pathway is carbohydrate degradation; glycolysis; pyruvate from D-glyceraldehyde 3-phosphate: step 3/5. In terms of biological role, catalyzes the interconversion of 2-phosphoglycerate and 3-phosphoglycerate. This Mesomycoplasma hyopneumoniae (strain J / ATCC 25934 / NCTC 10110) (Mycoplasma hyopneumoniae) protein is 2,3-bisphosphoglycerate-independent phosphoglycerate mutase.